A 113-amino-acid chain; its full sequence is Nucleoid-associated protein Syncc9605_0027 (113 aa).

It belongs to the YbaB/EbfC family. Homodimer.

The protein resides in the cytoplasm. It is found in the nucleoid. Binds to DNA and alters its conformation. May be involved in regulation of gene expression, nucleoid organization and DNA protection. The polypeptide is Nucleoid-associated protein Syncc9605_0027 (Synechococcus sp. (strain CC9605)).